Consider the following 475-residue polypeptide: Trifunctional enzyme subunit beta, mitochondrial (475 aa).

Residues 1-34 (MTTILTSTFRNLSTTSKWALRSSIRPLSCSSQLH) constitute a mitochondrion transit peptide. K53 is subject to N6-succinyllysine. N6-acetyllysine; alternate is present on K73. At K73 the chain carries N6-succinyllysine; alternate. C139 serves as the catalytic Acyl-thioester intermediate. Residues 174-221 (IRHSRNMRKMMLDLNKAKTLGQRLSLLSKFRLNFLSPELPAVAEFSTN) lie within the membrane without spanning it. K189 bears the N6-acetyllysine; alternate mark. The residue at position 189 (K189) is an N6-succinyllysine; alternate. Residues K191, K273, and K292 each carry the N6-succinyllysine modification. K294 carries the N6-acetyllysine; alternate modification. At K294 the chain carries N6-succinyllysine; alternate. An N6-acetyllysine modification is found at K299. N6-acetyllysine; alternate is present on K333. Residue K333 is modified to N6-succinyllysine; alternate. 2 positions are modified to N6-acetyllysine: K349 and K362. C459 serves as the catalytic Proton donor/acceptor.

The protein belongs to the thiolase-like superfamily. Thiolase family. As to quaternary structure, heterotetramer of 2 alpha/HADHA and 2 beta/HADHB subunits; forms the mitochondrial trifunctional enzyme. Also purified as higher order heterooligomers including a 4 alpha/HADHA and 4 beta/HADHB heterooligomer which physiological significance remains unclear. The mitochondrial trifunctional enzyme interacts with MTLN. Interacts with RSAD2/viperin. In terms of processing, acetylation of Lys-202 is observed in liver mitochondria from fasted mice but not from fed mice.

Its subcellular location is the mitochondrion. It localises to the mitochondrion inner membrane. It is found in the mitochondrion outer membrane. The protein localises to the endoplasmic reticulum. The catalysed reaction is an acyl-CoA + acetyl-CoA = a 3-oxoacyl-CoA + CoA. It carries out the reaction butanoyl-CoA + acetyl-CoA = 3-oxohexanoyl-CoA + CoA. It catalyses the reaction hexanoyl-CoA + acetyl-CoA = 3-oxooctanoyl-CoA + CoA. The enzyme catalyses octanoyl-CoA + acetyl-CoA = 3-oxodecanoyl-CoA + CoA. The catalysed reaction is decanoyl-CoA + acetyl-CoA = 3-oxododecanoyl-CoA + CoA. It carries out the reaction dodecanoyl-CoA + acetyl-CoA = 3-oxotetradecanoyl-CoA + CoA. It catalyses the reaction tetradecanoyl-CoA + acetyl-CoA = 3-oxohexadecanoyl-CoA + CoA. The protein operates within lipid metabolism; fatty acid beta-oxidation. Mitochondrial trifunctional enzyme catalyzes the last three of the four reactions of the mitochondrial beta-oxidation pathway. The mitochondrial beta-oxidation pathway is the major energy-producing process in tissues and is performed through four consecutive reactions breaking down fatty acids into acetyl-CoA. Among the enzymes involved in this pathway, the trifunctional enzyme exhibits specificity for long-chain fatty acids. Mitochondrial trifunctional enzyme is a heterotetrameric complex composed of two proteins, the trifunctional enzyme subunit alpha/HADHA carries the 2,3-enoyl-CoA hydratase and the 3-hydroxyacyl-CoA dehydrogenase activities, while the trifunctional enzyme subunit beta/HADHB described here bears the 3-ketoacyl-CoA thiolase activity. This is Trifunctional enzyme subunit beta, mitochondrial (Hadhb) from Mus musculus (Mouse).